The sequence spans 962 residues: Integrator complex subunit 7 (962 aa).

Phosphoserine occurs at positions 338 and 809.

Belongs to the Integrator subunit 7 family. In terms of assembly, component of the Integrator complex, composed of core subunits INTS1, INTS2, INTS3, INTS4, INTS5, INTS6, INTS7, INTS8, INTS9/RC74, INTS10, INTS11/CPSF3L, INTS12, INTS13, INTS14 and INTS15. The core complex associates with protein phosphatase 2A subunits PPP2CA and PPP2R1A, to form the Integrator-PP2A (INTAC) complex. Interacts with NABP2.

It localises to the nucleus. It is found in the chromosome. The protein resides in the cytoplasm. Component of the integrator complex, a multiprotein complex that terminates RNA polymerase II (Pol II) transcription in the promoter-proximal region of genes. The integrator complex provides a quality checkpoint during transcription elongation by driving premature transcription termination of transcripts that are unfavorably configured for transcriptional elongation: the complex terminates transcription by (1) catalyzing dephosphorylation of the C-terminal domain (CTD) of Pol II subunit POLR2A/RPB1 and SUPT5H/SPT5, (2) degrading the exiting nascent RNA transcript via endonuclease activity and (3) promoting the release of Pol II from bound DNA. The integrator complex is also involved in terminating the synthesis of non-coding Pol II transcripts, such as enhancer RNAs (eRNAs), small nuclear RNAs (snRNAs), telomerase RNAs and long non-coding RNAs (lncRNAs). May be not involved in the recruitment of cytoplasmic dynein to the nuclear envelope by different components of the INT complex. Plays a role in DNA damage response (DDR) signaling during the S phase. This Bos taurus (Bovine) protein is Integrator complex subunit 7 (INTS7).